Consider the following 130-residue polypeptide: Protein Wnt-9 (130 aa).

The O-palmitoleoyl serine; by PORCN moiety is linked to residue serine 1. The segment at 41 to 69 (AGERTIARSRRRPREQRGQRRPKVSDGAL) is disordered. The span at 47–62 (ARSRRRPREQRGQRRP) shows a compositional bias: basic residues. N-linked (GlcNAc...) asparagine glycosylation occurs at asparagine 97. Cysteines 100 and 111 form a disulfide.

The protein belongs to the Wnt family. In terms of processing, palmitoleoylation is required for efficient binding to frizzled receptors. Depalmitoleoylation leads to Wnt signaling pathway inhibition.

The protein resides in the secreted. It is found in the extracellular space. Its subcellular location is the extracellular matrix. In terms of biological role, ligand for members of the frizzled family of seven transmembrane receptors. Probable developmental protein. May be a signaling molecule which affects the development of discrete regions of tissues. Is likely to signal over only few cell diameters. The chain is Protein Wnt-9 (WNT-9) from Eptatretus stoutii (Pacific hagfish).